We begin with the raw amino-acid sequence, 468 residues long: Factor XIIa inhibitor (468 aa).

The signal sequence occupies residues 1-23 (MASRLTPLTLLLLLLLAGDRVTS). Residues 27 to 60 (VGPGNLQEGESEGDSQKGGILDGESIQGNEDSPT) are disordered. Residues asparagine 65, asparagine 176, asparagine 227, and asparagine 326 are each glycosylated (N-linked (GlcNAc...) asparagine). Intrachain disulfides connect cysteine 97–cysteine 396 and cysteine 104–cysteine 179.

Belongs to the serpin family. N- and O-glycosylated.

Its subcellular location is the secreted. Functionally, may play a potentially crucial role in regulating important physiological pathways including complement activation, blood coagulation, fibrinolysis and the generation of kinins. This chain is Factor XIIa inhibitor, found in Bos taurus (Bovine).